Consider the following 1700-residue polypeptide: A-kinase anchor protein SPHKAP (1700 aa).

Disordered regions lie at residues 364–385, 742–778, and 793–885; these read SNLNPGDHEDTRNALPPRQDGE, IRRRETEPSCQPSDPGASQAWTKATESSSSSPLSNSH, and SKQD…NTQE. The segment covering 768-778 has biased composition (low complexity); the sequence is SSSSSPLSNSH. Residues 822–831 show a composition bias toward polar residues; the sequence is DSSTATTSSK. Basic and acidic residues predominate over residues 839-855; it reads AGEDTKSPHHSENECRA. A compositionally biased stretch (polar residues) spans 857-873; the sequence is SEGQRSPTVSQSRSGSQ. Residues 929 to 946 form a PKA-RII subunit binding domain region; it reads FAEELADTVVSMATEIAA. Positions 980–1006 are disordered; it reads KRKKESQGSGTAVRKHKPPRLSEIKRK. 8 positions are modified to phosphoserine: Ser1025, Ser1085, Ser1107, Ser1120, Ser1121, Ser1124, Ser1259, and Ser1288. 3 disordered regions span residues 1374 to 1414, 1481 to 1535, and 1585 to 1604; these read DSVT…PVPI, IHSD…DTSS, and GQSESTEAPASGPPTGTASP. A compositionally biased stretch (polar residues) spans 1383–1398; sequence PVSSLSKTASLTNHSP. Over residues 1586–1604 the composition is skewed to polar residues; the sequence is QSESTEAPASGPPTGTASP.

This sequence belongs to the AKAP110 family. Interacts (via the PKA-RII subunit binding domain) with the RI subunit of PKA. Interacts with SPHK1; the interaction greatly reduces SPHK1 activity. As to expression, highly expressed in heart. Both isoforms abundantly expressed in ventricle. Also expressed in spleen, ovary and brain.

The protein localises to the cytoplasm. Functionally, anchoring protein that binds preferentially to the type I regulatory subunit of c-AMP-dependent protein kinase (PKA type I) and targets it to distinct subcellular compartments. May act as a converging factor linking cAMP and sphingosine signaling pathways. Plays a regulatory role in the modulation of SPHK1. The sequence is that of A-kinase anchor protein SPHKAP (SPHKAP) from Homo sapiens (Human).